A 608-amino-acid polypeptide reads, in one-letter code: Pentatricopeptide repeat-containing protein At5g40410, mitochondrial (608 aa).

The N-terminal 28 residues, M1–H28, are a transit peptide targeting the mitochondrion. 11 PPR repeats span residues L30–R64, H65–R95, D96–F130, N133–E167, E168–K198, N199–P233, D234–G268, N269–P299, D300–P334, D335–R365, and R371–E401. The type E motif stretch occupies residues V406–G481. The segment at N482 to K512 is type E(+) motif. The segment at E514 to W608 is type DYW motif.

It belongs to the PPR family. PCMP-H subfamily.

The protein resides in the mitochondrion. The protein is Pentatricopeptide repeat-containing protein At5g40410, mitochondrial (PCMP-H15) of Arabidopsis thaliana (Mouse-ear cress).